The sequence spans 244 residues: CTD nuclear envelope phosphatase 1 (244 aa).

Residues 7 to 29 (LLGLRTFVAFAAKLWSFFIYLLR) traverse the membrane as a helical segment. The FCP1 homology domain maps to 57 to 224 (AQVKRKILVL…LNLLPMLDAL (168 aa)).

The protein belongs to the dullard family. In terms of assembly, interacts with CNEP1R1; the complex dephosphorylates LPIN1 and LPIN2. As to expression, muscle specific with lower expression in other metabolic tissues.

The protein resides in the endoplasmic reticulum membrane. It is found in the nucleus membrane. It catalyses the reaction O-phospho-L-seryl-[protein] + H2O = L-seryl-[protein] + phosphate. It carries out the reaction O-phospho-L-threonyl-[protein] + H2O = L-threonyl-[protein] + phosphate. In terms of biological role, serine/threonine protein phosphatase forming with CNEP1R1 an active phosphatase complex that dephosphorylates and may activate LPIN1 and LPIN2. LPIN1 and LPIN2 are phosphatidate phosphatases that catalyze the conversion of phosphatidic acid to diacylglycerol and control the metabolism of fatty acids at different levels. May indirectly modulate the lipid composition of nuclear and/or endoplasmic reticulum membranes and be required for proper nuclear membrane morphology and/or dynamics. May also indirectly regulate the production of lipid droplets and triacylglycerol. May antagonize BMP signaling. The sequence is that of CTD nuclear envelope phosphatase 1 (Ctdnep1) from Mus musculus (Mouse).